A 197-amino-acid polypeptide reads, in one-letter code: Regulator of free ubiquitin chains 1 (197 aa).

This sequence belongs to the RFU1 family.

Its subcellular location is the endosome. Inhibitor of the DOA4 deubiquitinase involved in the regulation of protein degradation by the proteasome and maintenance of a normal level of free ubiquitin. This is Regulator of free ubiquitin chains 1 (RFU1) from Vanderwaltozyma polyspora (strain ATCC 22028 / DSM 70294 / BCRC 21397 / CBS 2163 / NBRC 10782 / NRRL Y-8283 / UCD 57-17) (Kluyveromyces polysporus).